The chain runs to 70 residues: Insulin (70 aa).

Cystine bridges form between cysteine 7-cysteine 56, cysteine 19-cysteine 69, and cysteine 55-cysteine 60. The propeptide at 33–49 (FVDSLAGYSKHQNGGIS) is c peptide.

This sequence belongs to the insulin family. As to quaternary structure, heterodimer of a B chain and an A chain linked by two disulfide bonds.

It localises to the secreted. Insulin decreases blood glucose concentration. It increases cell permeability to monosaccharides, amino acids and fatty acids. It accelerates glycolysis, the pentose phosphate cycle, and glycogen synthesis in liver. This is Insulin (ins) from Torpedo marmorata (Marbled electric ray).